Consider the following 190-residue polypeptide: Imidazoleglycerol-phosphate dehydratase (190 aa).

It belongs to the imidazoleglycerol-phosphate dehydratase family.

The protein resides in the cytoplasm. It carries out the reaction D-erythro-1-(imidazol-4-yl)glycerol 3-phosphate = 3-(imidazol-4-yl)-2-oxopropyl phosphate + H2O. It functions in the pathway amino-acid biosynthesis; L-histidine biosynthesis; L-histidine from 5-phospho-alpha-D-ribose 1-diphosphate: step 6/9. The chain is Imidazoleglycerol-phosphate dehydratase from Sulfurimonas denitrificans (strain ATCC 33889 / DSM 1251) (Thiomicrospira denitrificans (strain ATCC 33889 / DSM 1251)).